A 150-amino-acid chain; its full sequence is Catabolic 3-dehydroquinase 2 (150 aa).

Y23 (proton acceptor) is an active-site residue. Substrate is bound by residues N74, H80, and D87. Residue H100 is the Proton donor of the active site. Substrate is bound by residues 101 to 102 and R111; that span reads IT.

The protein belongs to the type-II 3-dehydroquinase family. In terms of assembly, homododecamer. Adopts a ring-like structure, composed of an arrangement of two hexameric rings stacked on top of one another.

It catalyses the reaction 3-dehydroquinate = 3-dehydroshikimate + H2O. It functions in the pathway aromatic compound metabolism; 3,4-dihydroxybenzoate biosynthesis; 3,4-dihydroxybenzoate from 3-dehydroquinate: step 1/2. Functionally, is involved in the catabolism of quinate. Allows the utilization of quinate as carbon source via the beta-ketoadipate pathway. This Aspergillus fumigatus (strain ATCC MYA-4609 / CBS 101355 / FGSC A1100 / Af293) (Neosartorya fumigata) protein is Catabolic 3-dehydroquinase 2.